The sequence spans 117 residues: MARVKRGVMVRKRHKKLLEQAKGYRGSRSRRVKVARETVMKALWYAYRDRRNRKRDFRRLWIVRINAAARMHGMSYSRFMNGLKRAGIDLDRKILADMAVRDPAAFSRVVEQARQAV.

This sequence belongs to the bacterial ribosomal protein bL20 family.

In terms of biological role, binds directly to 23S ribosomal RNA and is necessary for the in vitro assembly process of the 50S ribosomal subunit. It is not involved in the protein synthesizing functions of that subunit. In Roseiflexus sp. (strain RS-1), this protein is Large ribosomal subunit protein bL20.